The sequence spans 325 residues: Tagatose 1,6-diphosphate aldolase (325 aa).

Belongs to the aldolase LacD family.

The enzyme catalyses D-tagatofuranose 1,6-bisphosphate = D-glyceraldehyde 3-phosphate + dihydroxyacetone phosphate. The protein operates within carbohydrate metabolism; D-tagatose 6-phosphate degradation; D-glyceraldehyde 3-phosphate and glycerone phosphate from D-tagatose 6-phosphate: step 2/2. The protein is Tagatose 1,6-diphosphate aldolase of Staphylococcus epidermidis (strain ATCC 35984 / DSM 28319 / BCRC 17069 / CCUG 31568 / BM 3577 / RP62A).